The following is a 364-amino-acid chain: Dihydroorotate dehydrogenase (quinone) (364 aa).

Residues 61-65 and T85 each bind FMN; that span reads AGFDK. K65 serves as a coordination point for substrate. Position 110 to 114 (110 to 114) interacts with substrate; that stretch reads NRMGF. The FMN site is built by N139 and N170. Residue N170 participates in substrate binding. The active-site Nucleophile is the S173. Substrate is bound at residue N175. 2 residues coordinate FMN: K214 and A242. A substrate-binding site is contributed by 243–244; the sequence is NT. FMN contacts are provided by residues G266, G295, and 316–317; that span reads YS.

It belongs to the dihydroorotate dehydrogenase family. Type 2 subfamily. In terms of assembly, monomer. FMN serves as cofactor.

It is found in the cell membrane. The enzyme catalyses (S)-dihydroorotate + a quinone = orotate + a quinol. It functions in the pathway pyrimidine metabolism; UMP biosynthesis via de novo pathway; orotate from (S)-dihydroorotate (quinone route): step 1/1. Its function is as follows. Catalyzes the conversion of dihydroorotate to orotate with quinone as electron acceptor. This Rhodopseudomonas palustris (strain TIE-1) protein is Dihydroorotate dehydrogenase (quinone).